The chain runs to 1876 residues: 1,3-beta-glucan synthase component FKS1 (1876 aa).

Polar residues-rich tracts occupy residues 1-25 (MNTD…QSQE) and 60-71 (QPPNESYDQDYT). The interval 1 to 108 (MNTDQQPYQG…PGTPGYDSYG (108 aa)) is disordered. The Cytoplasmic portion of the chain corresponds to 1–454 (MNTDQQPYQG…WLHLVTNFNR (454 aa)). A Glycyl lysine isopeptide (Lys-Gly) (interchain with G-Cter in ubiquitin) cross-link involves residue lysine 259. A phosphothreonine mark is found at threonine 269 and threonine 272. Glycyl lysine isopeptide (Lys-Gly) (interchain with G-Cter in ubiquitin) cross-links involve residues lysine 275 and lysine 386. A helical transmembrane segment spans residues 455–475 (IWVMHISIFWMYFAYNSPTFY). At 476–492 (THNYQQLVDNQPLAAYK) the chain is on the extracellular side. Residues 493-513 (WASCALGGTVASLIQIVATLC) form a helical membrane-spanning segment. At 514–531 (EWSFVPRKWAGAQHLSRR) the chain is on the cytoplasmic side. The chain crosses the membrane as a helical span at residues 532–552 (FWFLCIIFGINLGPIIFVFAY). Topologically, residues 553-563 (DKDTVYSTAAH) are extracellular. A helical membrane pass occupies residues 564-584 (VVAAVMFFVAVATIIFFSIMP). Residues 585–621 (LGGLFTSYMKKSTRRYVASQTFTAAFAPLHGLDRWMS) are Cytoplasmic-facing. The helical transmembrane segment at 622 to 642 (YLVWVTVFAAKYSESYYFLVL) threads the bilayer. Residues 643 to 678 (SLRDPIRILSTTAMRCTGEYWWGAVLCKVQPKIVLG) are Extracellular-facing. The helical transmembrane segment at 679–699 (LVIATDFILFFLDTYLWYIIV) threads the bilayer. Residues 700-1358 (NTIFSVGKSF…QPAVDWVRRY (659 aa)) lie on the Cytoplasmic side of the membrane. Residues lysine 910 and lysine 915 each participate in a glycyl lysine isopeptide (Lys-Gly) (interchain with G-Cter in ubiquitin) cross-link. The helical transmembrane segment at 1359–1379 (TLSIFIVFWIAFVPIVVQELI) threads the bilayer. The Extracellular portion of the chain corresponds to 1380-1444 (ERGLWKATQR…RIPFSILYSR (65 aa)). Residues 1445–1465 (FAGSAIYMGARSMLMLLFGTV) form a helical membrane-spanning segment. Topologically, residues 1466-1469 (AHWQ) are cytoplasmic. The chain crosses the membrane as a helical span at residues 1470 to 1490 (APLLWFWASLSSLIFAPFVFN). Residues 1491–1560 (PHQFAWEDFF…DASRAHRTNL (70 aa)) are Extracellular-facing. Glycyl lysine isopeptide (Lys-Gly) (interchain with G-Cter in ubiquitin) cross-links involve residues lysine 1539 and lysine 1547. Residues 1561–1581 (IMAEIIPCAIYAAGCFIAFTF) form a helical membrane-spanning segment. The Cytoplasmic portion of the chain corresponds to 1582-1601 (INAQTGVKTTDDDRVNSVLR). A helical transmembrane segment spans residues 1602 to 1622 (IIICTLAPIAVNLGVLFFCMG). At 1623–1643 (MSCCSGPLFGMCCKKTGSVMA) the chain is on the extracellular side. The helical transmembrane segment at 1644–1664 (GIAHGVAVIVHIAFFIVMWVL) threads the bilayer. The Cytoplasmic segment spans residues 1665–1672 (ESFNFVRM). Residues 1673-1695 (LIGVVTCIQCQRLIFHCMTALML) form a helical membrane-spanning segment. The Extracellular portion of the chain corresponds to 1696–1802 (TREFKNDHAN…RKRMVKKYCS (107 aa)). Residues 1803 to 1823 (LYFLVLAIFAGCIIGPAVASA) form a helical membrane-spanning segment. Over 1824-1876 (KIHKHIGDSLDGVVHNLFQPINTTNNDTGSQMSTYQSHYYTHTPSLKTWSTIK) the chain is Cytoplasmic.

This sequence belongs to the glycosyltransferase 48 family. In terms of assembly, component of the 1,3-beta-glucan synthase (GS) complex, composed of two alternate catalytic subunits FKS1 or GSC2, and a regulatory subunit RHO1. Interacts with RHO1, which is a GTP-binding protein.

The protein resides in the mitochondrion. The protein localises to the cell membrane. The catalysed reaction is [(1-&gt;3)-beta-D-glucosyl](n) + UDP-alpha-D-glucose = [(1-&gt;3)-beta-D-glucosyl](n+1) + UDP + H(+). Alternate catalytic subunit of the 1,3-beta-glucan synthase (GS) complex. Synthesizes 1,3-beta-glucan, a major structural component of the yeast cell wall. Involved in cell wall synthesis, maintenance and remodeling. This is 1,3-beta-glucan synthase component FKS1 (FKS1) from Saccharomyces cerevisiae (strain ATCC 204508 / S288c) (Baker's yeast).